We begin with the raw amino-acid sequence, 774 residues long: Glycophorin-binding protein 130 (774 aa).

Positions 84-88 (RILAE) match the PEXEL motif motif. Disordered regions lie at residues 97 to 243 (EKTT…AADP), 256 to 291 (LTNT…EYAS), 310 to 334 (DPND…PEGQ), 358 to 383 (NTDP…DPEG), 410 to 434 (DPND…PEGQ), 458 to 481 (NTDP…SDPE), 509 to 533 (DPND…PEGQ), 609 to 632 (DPND…DPEG), 661 to 682 (NDEV…DPEG), and 709 to 734 (DPND…EGQI). Composition is skewed to basic and acidic residues over residues 117-140 (TKKD…SEKQ) and 174-198 (KKEE…EPKA). The span at 201 to 228 (VSQKPSTSTRSNNEVKIRAASNQETLTS) shows a compositional bias: polar residues. GBP repeat units lie at residues 226–275 (LTSA…NKED), 276–325 (LTSA…NKED), 326–375 (LTSA…NKED), 376–425 (LTSA…NKED), 426–474 (LTSA…DNKE), 475–524 (LTSS…NKED), 525–574 (LTSA…NKEE), 575–624 (LTSS…NKED), 625–674 (LTSA…NKED), 675–724 (LTSA…NKED), and 725–774 (LTSA…NNEA). Composition is skewed to basic and acidic residues over residues 264-276 (EVER…KEDL), 314-326 (DVER…KEDL), 364-376 (EVER…KEDL), 414-426 (EVER…KEDL), 464-476 (EVER…KELT), 513-525 (EVER…KEDL), 613-625 (EVER…KEDL), 663-675 (EVER…KEDL), and 713-725 (DVER…KEDL).

As to quaternary structure, interacts with host glycophorin.

Its subcellular location is the secreted. The protein localises to the cell surface. The protein resides in the host cytoplasm. Functionally, involved in merozoite invasion of host erythrocytes. The chain is Glycophorin-binding protein 130 from Plasmodium falciparum (isolate FCR-3 / Gambia).